The chain runs to 640 residues: Scarecrow-like protein 27 (640 aa).

Composition is skewed to low complexity over residues 68–79 (SYSSTTTTLSSS) and 86–98 (TVTNTTVTAGDDN). A disordered region spans residues 68-98 (SYSSTTTTLSSSHGGGGTTVTNTTVTAGDDN). Residues 259–639 (GMAGDDQSVI…KELVTVSAWK (381 aa)) enclose the GRAS domain. Residues 266 to 331 (SVIIEQLFNA…AEALLSLIHN (66 aa)) are leucine repeat I (LRI). Positions 350 to 422 (YRSFSETSPF…NRASSLKLTV (73 aa)) are VHIID. The VHIID signature appears at 383–387 (IHIID). Residues 438-470 (FTEENLKTFAGEVKIPFEIELLSVELLLNPAYW) form a leucine repeat II (LRII) region. The interval 480–565 (EAIAVNLPVN…RFWVQPSIEK (86 aa)) is PFYRE. The SAW stretch occupies residues 568 to 639 (MKRHRWIERS…KELVTVSAWK (72 aa)).

The protein belongs to the GRAS family. In terms of tissue distribution, expressed in seedlings, roots, cotyledons, leaves and flowers.

Its subcellular location is the nucleus. Its function is as follows. Probable transcription factor involved in plant development. This chain is Scarecrow-like protein 27 (SCL27), found in Arabidopsis thaliana (Mouse-ear cress).